Here is a 326-residue protein sequence, read N- to C-terminus: Microtubule-associated protein RP/EB family member 2 (326 aa).

Ser-9 carries the phosphoserine modification. Residues 56–158 (TMSRHDIIAW…FIQWFKKFYD (103 aa)) form the Calponin-homology (CH) domain. Position 166 is a phosphotyrosine (Tyr-166). Disordered stretches follow at residues 170–239 (EARQ…DKDL) and 298–326 (ASDE…QEEY). The interval 186–326 (QIFNLPKKSH…EQQPQQQEEY (141 aa)) is DCTN1-binding. Positions 199-233 (SPTAGAAKSSPASKPGSTPSRPSSAKRASSSGSAS) are enriched in low complexity. A phosphoserine mark is found at Ser-218 and Ser-235. The EB1 C-terminal domain occupies 235–305 (SDKDLETQVI…LYASDEHEGH (71 aa)). An APC-binding region spans residues 258–301 (EGVEKERDFYFGKLREIELLCQEHGQENDDLVQRLMDVLYASDE). Residues 299–316 (SDEHEGHPEEPEAEEQVH) show a composition bias toward basic and acidic residues. A compositionally biased stretch (low complexity) spans 317-326 (EQQPQQQEEY).

This sequence belongs to the MAPRE family. Interacts with DCTN1. Interacts with APC (via C-terminal). Interacts with monomeric and polymerized tubulin. Interacts with SLAIN1. Interacts (via the N-terminal region) with BAG1. Interacts with ASB14. Interacts with HAX1; this interaction is essential for epidermal cell migration. In terms of processing, phosphorylated at Ser-235 by CK2 leading to enhanced cell adhesion. Phosphorylated by CDK1 and AURKB during mitosis reduces the binding affinity of MAPRE2 for microtubules. Ubiquitinated in an ASB14-dependent manner; leading to proteasomal degradation.

The protein resides in the cytoplasm. It is found in the cytoskeleton. Its function is as follows. Adapter protein that is involved in microtubule polymerization, and spindle function by stabilizing microtubules and anchoring them at centrosomes. Therefore, ensures mitotic progression and genome stability. Acts as a central regulator of microtubule reorganization in apico-basal epithelial differentiation. Plays a role during oocyte meiosis by regulating microtubule dynamics. Participates in neurite growth by interacting with plexin B3/PLXNB3 and microtubule reorganization during apico-basal epithelial differentiation. Also plays an essential role for cell migration and focal adhesion dynamics. Mechanistically, recruits HAX1 to microtubules in order to regulate focal adhesion dynamics. This Bos taurus (Bovine) protein is Microtubule-associated protein RP/EB family member 2 (MAPRE2).